Reading from the N-terminus, the 224-residue chain is 7-cyano-7-deazaguanine synthase 1 (224 aa).

10–20 (LSGGLDSMVCA) lines the ATP pocket. Cys-189, Cys-199, Cys-202, and Cys-205 together coordinate Zn(2+).

It belongs to the QueC family. Zn(2+) is required as a cofactor.

The catalysed reaction is 7-carboxy-7-deazaguanine + NH4(+) + ATP = 7-cyano-7-deazaguanine + ADP + phosphate + H2O + H(+). It functions in the pathway purine metabolism; 7-cyano-7-deazaguanine biosynthesis. In terms of biological role, catalyzes the ATP-dependent conversion of 7-carboxy-7-deazaguanine (CDG) to 7-cyano-7-deazaguanine (preQ(0)). The sequence is that of 7-cyano-7-deazaguanine synthase 1 from Sphingopyxis alaskensis (strain DSM 13593 / LMG 18877 / RB2256) (Sphingomonas alaskensis).